The primary structure comprises 297 residues: Hydroxysqualene synthase (297 aa).

It belongs to the phytoene/squalene synthase family. HpnC subfamily.

It carries out the reaction presqualene diphosphate + H2O = hydroxysqualene + diphosphate. Its pathway is secondary metabolite biosynthesis; hopanoid biosynthesis. In terms of biological role, involved in the biosynthesis of the hopanoid precursor squalene (SQ) from farnesyl diphosphate (FPP). Catalyzes the second step, the conversion of presqualene diphosphate (PSPP) to hydroxysqualene (HSQ). This Zymomonas mobilis subsp. mobilis (strain ATCC 31821 / ZM4 / CP4) protein is Hydroxysqualene synthase.